Reading from the N-terminus, the 431-residue chain is Adenylosuccinate synthetase (431 aa).

GTP is bound by residues 13–19 (GDEGKGK) and 41–43 (GHT). Residue Asp-14 is the Proton acceptor of the active site. Mg(2+)-binding residues include Asp-14 and Gly-41. IMP-binding positions include 14–17 (DEGK), 39–42 (NAGH), Thr-130, Arg-144, Gln-225, Thr-240, and Arg-304. The active-site Proton donor is the His-42. Position 300 to 306 (300 to 306 (ATTGRKR)) interacts with substrate. GTP-binding positions include Arg-306, 332–334 (KLD), and 415–417 (STG).

It belongs to the adenylosuccinate synthetase family. As to quaternary structure, homodimer. Mg(2+) serves as cofactor.

The protein resides in the cytoplasm. The enzyme catalyses IMP + L-aspartate + GTP = N(6)-(1,2-dicarboxyethyl)-AMP + GDP + phosphate + 2 H(+). The protein operates within purine metabolism; AMP biosynthesis via de novo pathway; AMP from IMP: step 1/2. Its function is as follows. Plays an important role in the de novo pathway of purine nucleotide biosynthesis. Catalyzes the first committed step in the biosynthesis of AMP from IMP. The polypeptide is Adenylosuccinate synthetase (Shewanella woodyi (strain ATCC 51908 / MS32)).